Consider the following 419-residue polypeptide: L-rhamnose isomerase (419 aa).

Mn(2+) contacts are provided by H262, D294, and D296.

It belongs to the rhamnose isomerase family. Homotetramer. Mn(2+) serves as cofactor.

The protein localises to the cytoplasm. The enzyme catalyses L-rhamnopyranose = L-rhamnulose. Its pathway is carbohydrate degradation; L-rhamnose degradation; glycerone phosphate from L-rhamnose: step 1/3. Catalyzes the interconversion of L-rhamnose and L-rhamnulose. This Salmonella newport (strain SL254) protein is L-rhamnose isomerase.